The primary structure comprises 2635 residues: Protein unc-79 homolog (2635 aa).

A phosphoserine mark is found at serine 754 and serine 758. Disordered regions lie at residues 907–929, 1538–1575, 1607–1678, 1693–1832, 1863–1909, and 1929–1950; these read GPEGEEEENPASKHGENPGNCTE, IAQRPNDPGRSRQNSATRPDNSEIPENPAMEGFPDARR, LIDL…SVLS, SKDF…FKIQ, LGEQ…TQYR, and LEHQSSAPHNISNWDTEQIQPG. The span at 1666–1678 shows a compositional bias: low complexity; the sequence is SSPSVPSHPSVLS. Positions 1699-1713 are enriched in polar residues; it reads KDSGNNQSAGNTDSA. The span at 1761–1775 shows a compositional bias: basic and acidic residues; that stretch reads LDDHPDPGTEGEKPG. 2 stretches are compositionally biased toward polar residues: residues 1897-1909 and 1929-1947; these read ETSSHSSISTQYR and LEHQSSAPHNISNWDTEQI. The next 2 helical transmembrane spans lie at 2223–2243 and 2466–2486; these read LLSFVIQNAVFTLAYLVELCG and VLHMCSLFHAFIFAQLWTVYC.

This sequence belongs to the unc-79 family. In terms of assembly, NALCN complex consists of NALCN and auxiliary subunits, UNC79, UNC80 and NACL1. These auxiliary subunits are essential for the NALCN channel function. UNC80 bridges NALCN to UNC79.

The protein localises to the cell membrane. Its function is as follows. Auxiliary subunit of the NALCN sodium channel complex, a voltage-gated ion channel responsible for the resting Na(+) permeability that controls neuronal excitability. Activated by neuropeptides substance P, neurotensin, and extracellular calcium that regulates neuronal excitability by controlling the sizes of NALCN-dependent sodium-leak current. This Homo sapiens (Human) protein is Protein unc-79 homolog (UNC79).